Consider the following 304-residue polypeptide: MGQCVTKCKNPSSTLGSKNGDRDPSSKSHGRRSASHREEQLPTCGKPGGDILVNGTKKAEAAPEACQLPTSSGDAGREPKSNAEESSLQRLEELFRRYKDEREDAILEEGMERFCNDLCVDPTEFRVLLLAWKFQAATMCKFTRKEFFDGCKAISADSIDGICARFPSLLTEAKQEDKFKDLYRFTFQFGLDSEEGQRSLHREIAIALWKLVFTQNNPPVLDQWLNFLTENPSGIKGISRDTWNMFLNFTQVIGPDLSNYSEDEAWPSLFDTFVEWEMERRKREGEGRGALSSGPEGLCPEEQT.

2 disordered regions span residues 1–87 (MGQC…EESS) and 284–304 (EGEG…EEQT). Gly-2 carries N-myristoyl glycine lipidation. The DCUN1 domain maps to 86 to 278 (SSLQRLEELF…LFDTFVEWEM (193 aa)).

As to quaternary structure, part of a complex containing DCUN1D3, CUL3 and RBX1. Interacts (via the DCUN1 domain) with the unneddylated cullins: interacts with CUL1, CUL2, CUL3, CUL4A, CUL4B and CUL5; these interactions promote the cullin neddylation and the identity of the cullin dictates the affinity of the interaction. Interacts preferentially with CUL3; this interaction triggers the relocalization of CUL3 to the cell membrane where CUL3 is neddylated. Interacts (via DCUN1 domain) with RBX1. May also interact with regulators or subunits of cullin-RING ligases such as RNF7, ELOB and DDB1; these interactions are bridged by cullins. Interacts (via DCUN1 domain) with CAND1; this interaction is bridged by cullins and strongly inhibits cullin neddylation. These CAND-cullin-DCNL complexes can only be neddylated in the presence of a substrate adapter. Interacts (via DCUN1 domain) with the N-terminally acetylated form of UBE2M and UBE2F.

Its subcellular location is the cell membrane. It is found in the cytoplasm. The protein localises to the nucleus. It localises to the perinuclear region. Its function is as follows. Contributes to the neddylation of all cullins by transferring NEDD8 from N-terminally acetylated NEDD8-conjugating E2s enzyme to different cullin C-terminal domain-RBX complexes and may play a role in the cell cycle progression by regulating the SCF ubiquitin E3 ligase complex, after UV damage. At the cell membrane, can promote and as well inhibit cullins neddylation. The sequence is that of DCN1-like protein 3 from Bos taurus (Bovine).